The following is a 154-amino-acid chain: Ribosome maturation factor RimP (154 aa).

This sequence belongs to the RimP family.

The protein localises to the cytoplasm. In terms of biological role, required for maturation of 30S ribosomal subunits. The sequence is that of Ribosome maturation factor RimP from Deinococcus deserti (strain DSM 17065 / CIP 109153 / LMG 22923 / VCD115).